The chain runs to 266 residues: NAD kinase 2 (266 aa).

Asp-51 acts as the Proton acceptor in catalysis. NAD(+) is bound by residues 51 to 52 (DG), 123 to 124 (NE), Arg-150, Asp-152, 163 to 168 (TGYSKS), and Ala-187.

The protein belongs to the NAD kinase family. Requires a divalent metal cation as cofactor.

Its subcellular location is the cytoplasm. The enzyme catalyses NAD(+) + ATP = ADP + NADP(+) + H(+). Involved in the regulation of the intracellular balance of NAD and NADP, and is a key enzyme in the biosynthesis of NADP. Catalyzes specifically the phosphorylation on 2'-hydroxyl of the adenosine moiety of NAD to yield NADP. This chain is NAD kinase 2, found in Oceanobacillus iheyensis (strain DSM 14371 / CIP 107618 / JCM 11309 / KCTC 3954 / HTE831).